Consider the following 102-residue polypeptide: Protein GOLVEN 4 (102 aa).

Positions M1–A27 are cleaved as a signal peptide. A propeptide spanning residues F28–R89 is cleaved from the precursor. A disordered region spans residues K56 to D78. Sulfotyrosine is present on Y91. At P99 the chain carries Hydroxyproline.

Belongs to the RGF family. Binds to LRR receptor-like serine/threonine-protein kinases to trigger their dimerization with SERK proteins and subsequent signaling. As to expression, expressed in roots and sepals.

The protein resides in the secreted. Functionally, signaling peptide (root growth factor) that promotes root hairs formation and growth. Maintains the postembryonic root stem cell niche. Regulates the pattern of root growth and lateral root development by modulating the length and the number of cortical cells in the root apical meristem (RAM), and the anticlinal asymmetric cell divisions in lateral root initiation cells. The sequence is that of Protein GOLVEN 4 from Arabidopsis thaliana (Mouse-ear cress).